The sequence spans 882 residues: DNA mismatch repair protein MutS (882 aa).

An ATP-binding site is contributed by 626 to 633 (GPNMAGKS).

Belongs to the DNA mismatch repair MutS family.

In terms of biological role, this protein is involved in the repair of mismatches in DNA. It is possible that it carries out the mismatch recognition step. This protein has a weak ATPase activity. The chain is DNA mismatch repair protein MutS from Anaeromyxobacter sp. (strain Fw109-5).